The chain runs to 101 residues: Protein Tat (101 aa).

Residues 1–20 (MEVVDPNLDPWKHPGSQPET) form a disordered region. The tract at residues 1–24 (MEVVDPNLDPWKHPGSQPETPCNK) is interaction with human CREBBP. Positions 1 to 48 (MEVVDPNLDPWKHPGSQPETPCNKCYCKKCCFHCQLCFTRKGLGISYG) are transactivation. Positions 22, 25, and 27 each coordinate Zn(2+). The interval 22-37 (CNKCYCKKCCFHCQLC) is cysteine-rich. Residue lysine 28 is modified to N6-acetyllysine; by host PCAF. Zn(2+) contacts are provided by cysteine 30, histidine 33, cysteine 34, and cysteine 37. Positions 38–48 (FTRKGLGISYG) are core. The tract at residues 47–101 (YGRKKRRQRRRTPQSGEVHQDPVSKQPLSQTRGDPKGPEESKKKVESKTKTDPSD) is disordered. Basic residues predominate over residues 48–58 (GRKKRRQRRRT). Positions 49-57 (RKKRRQRRR) match the Nuclear localization signal, RNA-binding (TAR), and protein transduction motif. The tract at residues 49–86 (RKKRRQRRRTPQSGEVHQDPVSKQPLSQTRGDPKGPEE) is interaction with the host capping enzyme RNGTT. An N6-acetyllysine; by host EP300 and GCN5L2 mark is found at lysine 50 and lysine 51. Arginine 52 and arginine 53 each carry asymmetric dimethylarginine; by host PRMT6. Residue lysine 71 forms a Glycyl lysine isopeptide (Lys-Gly) (interchain with G-Cter in ubiquitin) linkage. The Cell attachment site signature appears at 78 to 80 (RGD). Residues 79-101 (GDPKGPEESKKKVESKTKTDPSD) are compositionally biased toward basic and acidic residues.

This sequence belongs to the lentiviruses Tat family. Interacts with host CCNT1. Associates with the P-TEFb complex composed at least of Tat, P-TEFb (CDK9 and CCNT1), TAR RNA, RNA Pol II. Recruits the HATs CREBBP, TAF1/TFIID, EP300, PCAF and GCN5L2. Interacts with host KAT5/Tip60; this interaction targets the latter to degradation. Interacts with the host deacetylase SIRT1. Interacts with host capping enzyme RNGTT; this interaction stimulates RNGTT. Binds to host KDR, and to the host integrins ITGAV/ITGB3 and ITGA5/ITGB1. Interacts with host KPNB1/importin beta-1 without previous binding to KPNA1/importin alpha-1. Interacts with EIF2AK2. Interacts with host nucleosome assembly protein NAP1L1; this interaction may be required for the transport of Tat within the nucleus, since the two proteins interact at the nuclear rim. Interacts with host C1QBP/SF2P32; this interaction involves lysine-acetylated Tat. Interacts with the host chemokine receptors CCR2, CCR3 and CXCR4. Interacts with host DPP4/CD26; this interaction may trigger an anti-proliferative effect. Interacts with host LDLR. Interacts with the host extracellular matrix metalloproteinase MMP1. Interacts with host PRMT6; this interaction mediates Tat's methylation. Interacts with, and is ubiquitinated by MDM2/Hdm2. Interacts with host PSMC3 and HTATIP2. Interacts with STAB1; this interaction may overcome SATB1-mediated repression of IL2 and IL2RA (interleukin) in T cells by binding to the same domain than HDAC1. Interacts (when acetylated) with human CDK13, thereby increasing HIV-1 mRNA splicing and promoting the production of the doubly spliced HIV-1 protein Nef. Interacts with host TBP; this interaction modulates the activity of transcriptional pre-initiation complex. Interacts with host RELA. Interacts with host PLSCR1; this interaction negatively regulates Tat transactivation activity by altering its subcellular distribution. In terms of processing, asymmetrical arginine methylation by host PRMT6 seems to diminish the transactivation capacity of Tat and affects the interaction with host CCNT1. Acetylation by EP300, CREBBP, GCN5L2/GCN5 and PCAF regulates the transactivation activity of Tat. EP300-mediated acetylation of Lys-50 promotes dissociation of Tat from the TAR RNA through the competitive binding to PCAF's bromodomain. In addition, the non-acetylated Tat's N-terminus can also interact with PCAF. PCAF-mediated acetylation of Lys-28 enhances Tat's binding to CCNT1. Lys-50 is deacetylated by SIRT1. Post-translationally, polyubiquitination by host MDM2 does not target Tat to degradation, but activates its transactivation function and fosters interaction with CCNT1 and TAR RNA. In terms of processing, phosphorylated by EIF2AK2 on serine and threonine residues adjacent to the basic region important for TAR RNA binding and function. Phosphorylation of Tat by EIF2AK2 is dependent on the prior activation of EIF2AK2 by dsRNA.

It is found in the host nucleus. Its subcellular location is the host nucleolus. The protein resides in the host cytoplasm. It localises to the secreted. In terms of biological role, transcriptional activator that increases RNA Pol II processivity, thereby increasing the level of full-length viral transcripts. Recognizes a hairpin structure at the 5'-LTR of the nascent viral mRNAs referred to as the transactivation responsive RNA element (TAR) and recruits the cyclin T1-CDK9 complex (P-TEFb complex) that will in turn hyperphosphorylate the RNA polymerase II to allow efficient elongation. The CDK9 component of P-TEFb and other Tat-activated kinases hyperphosphorylate the C-terminus of RNA Pol II that becomes stabilized and much more processive. Other factors such as HTATSF1/Tat-SF1, SUPT5H/SPT5, and HTATIP2 are also important for Tat's function. Besides its effect on RNA Pol II processivity, Tat induces chromatin remodeling of proviral genes by recruiting the histone acetyltransferases (HATs) CREBBP, EP300 and PCAF to the chromatin. This also contributes to the increase in proviral transcription rate, especially when the provirus integrates in transcriptionally silent region of the host genome. To ensure maximal activation of the LTR, Tat mediates nuclear translocation of NF-kappa-B by interacting with host RELA. Through its interaction with host TBP, Tat may also modulate transcription initiation. Tat can reactivate a latently infected cell by penetrating in it and transactivating its LTR promoter. In the cytoplasm, Tat is thought to act as a translational activator of HIV-1 mRNAs. Its function is as follows. Extracellular circulating Tat can be endocytosed by surrounding uninfected cells via the binding to several surface receptors such as CD26, CXCR4, heparan sulfate proteoglycans (HSPG) or LDLR. Neurons are rarely infected, but they internalize Tat via their LDLR. Through its interaction with nuclear HATs, Tat is potentially able to control the acetylation-dependent cellular gene expression. Modulates the expression of many cellular genes involved in cell survival, proliferation or in coding for cytokines or cytokine receptors. Tat plays a role in T-cell and neurons apoptosis. Tat induced neurotoxicity and apoptosis probably contribute to neuroAIDS. Circulating Tat also acts as a chemokine-like and/or growth factor-like molecule that binds to specific receptors on the surface of the cells, affecting many cellular pathways. In the vascular system, Tat binds to ITGAV/ITGB3 and ITGA5/ITGB1 integrins dimers at the surface of endothelial cells and competes with bFGF for heparin-binding sites, leading to an excess of soluble bFGF. The protein is Protein Tat of Homo sapiens (Human).